We begin with the raw amino-acid sequence, 297 residues long: Protease HtpX homolog (297 aa).

Transmembrane regions (helical) follow at residues 14 to 34 (VILLFAFFVLLVVIGAAAGYL) and 39 to 59 (YQLGAAFALIIGAIYAFSMIF). His143 contributes to the Zn(2+) binding site. Residue Glu144 is part of the active site. His147 lines the Zn(2+) pocket. Helical transmembrane passes span 158-178 (IAVALASAVTLISSIGGRMMW) and 193-213 (GFGAIMLIFSILSLILAPLAA). Glu225 is a Zn(2+) binding site.

This sequence belongs to the peptidase M48B family. Zn(2+) serves as cofactor.

Its subcellular location is the cell membrane. This chain is Protease HtpX homolog, found in Streptococcus equi subsp. zooepidemicus (strain MGCS10565).